Consider the following 148-residue polypeptide: Respiratory supercomplex factor 1, mitochondrial (148 aa).

The HIG1 domain occupies 9–100 (LPSSFDAHPE…QERKQRKEFE (92 aa)). Helical transmembrane passes span 36 to 53 (PLIP…WRAY) and 72 to 89 (IYGH…GIYY). Residues 89–148 (YGQERKQRKEFEKALQEKQDQEKRDAWLRELEVRDKEDKDWRQRHAAMEMAAKEAEKKMG) adopt a coiled-coil conformation.

This sequence belongs to the RCF1 family. Associates with the respiratory chain complex III/complex IV supercomplex.

The protein localises to the mitochondrion membrane. Cytochrome c oxidase subunit which plays a role in assembly of respiratory supercomplexes. This Ajellomyces dermatitidis (strain ER-3 / ATCC MYA-2586) (Blastomyces dermatitidis) protein is Respiratory supercomplex factor 1, mitochondrial (RCF1).